Reading from the N-terminus, the 339-residue chain is NADH-quinone oxidoreductase subunit H (339 aa).

Helical transmembrane passes span 10–30 (FPLT…ILCV), 50–70 (PNVV…KLLF), 82–102 (ILFI…WAVI), 115–135 (VGVL…IIAG), 161–181 (MGLV…SGII), 187–207 (LPWW…ISVL), 235–255 (MGFA…SAMT), 275–295 (IPGF…FLWI), and 311–331 (GWKV…SVLF).

It belongs to the complex I subunit 1 family. In terms of assembly, NDH-1 is composed of 14 different subunits. Subunits NuoA, H, J, K, L, M, N constitute the membrane sector of the complex.

The protein localises to the cell inner membrane. The enzyme catalyses a quinone + NADH + 5 H(+)(in) = a quinol + NAD(+) + 4 H(+)(out). In terms of biological role, NDH-1 shuttles electrons from NADH, via FMN and iron-sulfur (Fe-S) centers, to quinones in the respiratory chain. The immediate electron acceptor for the enzyme in this species is believed to be ubiquinone. Couples the redox reaction to proton translocation (for every two electrons transferred, four hydrogen ions are translocated across the cytoplasmic membrane), and thus conserves the redox energy in a proton gradient. This subunit may bind ubiquinone. This Rickettsia prowazekii (strain Madrid E) protein is NADH-quinone oxidoreductase subunit H.